A 185-amino-acid polypeptide reads, in one-letter code: Ribosome-recycling factor (185 aa).

This sequence belongs to the RRF family.

Its subcellular location is the cytoplasm. Functionally, responsible for the release of ribosomes from messenger RNA at the termination of protein biosynthesis. May increase the efficiency of translation by recycling ribosomes from one round of translation to another. The chain is Ribosome-recycling factor from Pseudomonas aeruginosa (strain LESB58).